The primary structure comprises 418 residues: Trans-acting enoyl reductase (418 aa).

Belongs to the saccharopine dehydrogenase family. Enoyl reductase subfamily.

Functionally, involved in the reduction of the double bond between C-4 and C-5 during phthiocerol dimycocerosates (DIM A) and glycosylated phenolphthiocerol dimycocerosates (PGL) biosynthesis. The sequence is that of Trans-acting enoyl reductase from Mycobacterium tuberculosis (strain ATCC 25177 / H37Ra).